Reading from the N-terminus, the 339-residue chain is Ubiquitin carboxyl-terminal hydrolase 50 (339 aa).

Residues 44-339 (TGLWNLGNTC…AFCKNSVTQA (296 aa)) form the USP domain. The active-site Nucleophile is the cysteine 53. Catalysis depends on histidine 327, which acts as the Proton acceptor.

This sequence belongs to the peptidase C19 family. Weakly expressed in a few tissues.

Its subcellular location is the cytoplasm. It is found in the cytoskeleton. The protein resides in the microtubule organizing center. It localises to the centrosome. The protein localises to the nucleus. It carries out the reaction Thiol-dependent hydrolysis of ester, thioester, amide, peptide and isopeptide bonds formed by the C-terminal Gly of ubiquitin (a 76-residue protein attached to proteins as an intracellular targeting signal).. Its function is as follows. Deubiquitinating enzyme that removes conjugated ubiquitin from specific proteins to regulate different cellular processes. Regulates the inflammasome signaling pathway by deubiquitinating 'Lys-63'-linked polyubiquitination of the PYCARD/ASC adapter protein. Regulates the ubiquitination and stability of the ACE2 protein. Acts as a negative regulator of the G2/M checkpoint pathway, by preventing serine/threonine kinase WEE1 degradation, thereby repressing entry into mitosis following activation of the G2/M DNA damage checkpoint. The polypeptide is Ubiquitin carboxyl-terminal hydrolase 50 (Homo sapiens (Human)).